We begin with the raw amino-acid sequence, 332 residues long: Ketol-acid reductoisomerase (NADP(+)) (332 aa).

The KARI N-terminal Rossmann domain occupies 1–182; it reads MAVIYYDKDC…GSNRAGILET (182 aa). NADP(+)-binding positions include 25–28 and 83–86; these read YGAQ and DTSQ. Residue His108 is part of the active site. Residue Gly134 participates in NADP(+) binding. A KARI C-terminal knotted domain is found at 183–328; that stretch reads TFAEETETDL…AELRSMMSWL (146 aa). Residues Asp191, Glu195, Glu227, and Glu231 each coordinate Mg(2+). Ser252 contributes to the substrate binding site.

It belongs to the ketol-acid reductoisomerase family. Mg(2+) serves as cofactor.

The enzyme catalyses (2R)-2,3-dihydroxy-3-methylbutanoate + NADP(+) = (2S)-2-acetolactate + NADPH + H(+). The catalysed reaction is (2R,3R)-2,3-dihydroxy-3-methylpentanoate + NADP(+) = (S)-2-ethyl-2-hydroxy-3-oxobutanoate + NADPH + H(+). The protein operates within amino-acid biosynthesis; L-isoleucine biosynthesis; L-isoleucine from 2-oxobutanoate: step 2/4. It functions in the pathway amino-acid biosynthesis; L-valine biosynthesis; L-valine from pyruvate: step 2/4. Its function is as follows. Involved in the biosynthesis of branched-chain amino acids (BCAA). Catalyzes an alkyl-migration followed by a ketol-acid reduction of (S)-2-acetolactate (S2AL) to yield (R)-2,3-dihydroxy-isovalerate. In the isomerase reaction, S2AL is rearranged via a Mg-dependent methyl migration to produce 3-hydroxy-3-methyl-2-ketobutyrate (HMKB). In the reductase reaction, this 2-ketoacid undergoes a metal-dependent reduction by NADPH to yield (R)-2,3-dihydroxy-isovalerate. In Dehalococcoides mccartyi (strain CBDB1), this protein is Ketol-acid reductoisomerase (NADP(+)).